A 383-amino-acid polypeptide reads, in one-letter code: Succinyl-diaminopimelate desuccinylase (383 aa).

His-73 contributes to the Zn(2+) binding site. Asp-75 is a catalytic residue. Position 107 (Asp-107) interacts with Zn(2+). Catalysis depends on Glu-141, which acts as the Proton acceptor. Residues Glu-142, Glu-170, and His-356 each contribute to the Zn(2+) site.

It belongs to the peptidase M20A family. DapE subfamily. Homodimer. It depends on Zn(2+) as a cofactor. Requires Co(2+) as cofactor.

It catalyses the reaction N-succinyl-(2S,6S)-2,6-diaminopimelate + H2O = (2S,6S)-2,6-diaminopimelate + succinate. The protein operates within amino-acid biosynthesis; L-lysine biosynthesis via DAP pathway; LL-2,6-diaminopimelate from (S)-tetrahydrodipicolinate (succinylase route): step 3/3. Functionally, catalyzes the hydrolysis of N-succinyl-L,L-diaminopimelic acid (SDAP), forming succinate and LL-2,6-diaminopimelate (DAP), an intermediate involved in the bacterial biosynthesis of lysine and meso-diaminopimelic acid, an essential component of bacterial cell walls. The polypeptide is Succinyl-diaminopimelate desuccinylase (Pseudomonas putida (strain W619)).